The sequence spans 1575 residues: MIVTFVALALSCCTPQVTADCGLRPRLQSAIITGRIVGGEMAKLGEFPWQAAFLYKHVQVCGGTIIDTTWILSAAHCFDPHMYKLQSIKKEDALIRVADLDKTDDTDEGEMTFEVKDIIIHEQYNRQTFDNDIMLIEILGSITYGPTVQPACIPGANDAVADGTKCLISGWGDTQDHVHNRWPDKLQKAQVEVFARAQCLAAYPESTENMICAGLRTGGIDSCQGDSGGPLACPFTENTAQPTFFLQGIVSWGRGCALDGFPGVYTEVRKYSSWIANYTQHLLQDRNADVATFTITGDPCSSNGSIISGSEGDFSSPGFYSGSYTDNLDCKWIIQIPDIGSRIQLSFTEFGVEYHTFCWYDDVKVYSGAVGNIASADAADLLGSHCGMNIPSDLLSDGSSMTVIFHSDYMTHTLGFRAVFHAVSADVSQSGCGGIRELLTDHGEFSSKHYPNYYDADSICECFITAPTGKTIELNFLSFRLAGSDCADNVAIYDGLNSSYPRIIRLCINQGFNVTVPSSSNTMFVSFKTDGQVQDVGFEAYYYFSSNGNSTDDTDYSQCGFSSTPINADQTAARIVNGDIAIAGSWPWQISIRLCDTCNHYCGGSIISPSWIVTAAHCIESSAHITYIRAGDFDRFTIEISETIVPVAQIFIHPDYQKDLPNNADIALLKLANPLSYSSTIRPVCFPSQISTIPEENAECYVTGWGLTEENVMAQKLREAKLPLMPYDQCLNVYTSYVLNENMLCAGNISSGIDTCLGDSGGPFVCRKSRNDPWILYGVSAFGRECGSSRYPGVYTKVTRYIDWIIATANVSTVTSVVEEHDPTEFEQGCIQLLVLSNHEGDLSSPEYPELYGEGMLDCQWKIVLMDRTKSLNINFRFSHSQQDTAAACSLANIRISESYSDGTVGRQYGPYCGSSESILISSLHDLVVSLHNSQSQVKIGLKLEYRLEELEQSGCGQLKHLIENKGNFSSINYPNIYSANSHCEWYLHASIATHYLQISLSQFSLENAYQCRYDFLTVIDVTENGNISHGPYCGNSIPHVITGHGLFHIKFRSDASLNYKGFFASFVELNERPQEESGCGGVKFLNGTNGTFQTAGFPLAYEANLDCTWVIEVEDGYKVRLNFQQFSLESSSSCKYDWAMLYNGEFAFEAQRIDTLCGYDVKLEDIFESTSNVMRIDFHSDFSFNKQGFLAMYTAVSPGSSRSSVHQRENHLQEKRSGGCQDSIFTDEEGVIEYKQGDHTGNTRCLFRILTNHLHVIRLWLRKLSSLNLHENDSIKIYDKIDVDDIYSGVVKPVFQFTGIIGYLDSLPAYLDYNGGEISMLFSSDGQHGDTSFELIYKLMQDKSSTTNPKQLWNDHHGKWPWMVSLFGSSKYYFCSGVIISSRWIATAATCNLRSSEIHIIFPEGTNPKKIWEVEKIVVHPEFKMIYNVPQNDLALIQLVDPIEHIPPVCLPVASNIYSDCHVLKIPRLAGSAAFPDIVRISSVDTLAHDICMREWHLRITDDMLCGRINGTNSCQRDVGGPLVCQSPSDDAWYFVGISSWGPKICNDNTAHHRLPDVYVSVAYFLKWITKIIQ.

A signal peptide spans 1–19; it reads MIVTFVALALSCCTPQVTA. Residues 36–280 enclose the Peptidase S1 1 domain; that stretch reads IVGGEMAKLG…YSSWIANYTQ (245 aa). Cys61 and Cys77 are oxidised to a cystine. Residues His76 and Asp132 each act as charge relay system in the active site. Cystine bridges form between Cys166–Cys233, Cys199–Cys212, and Cys223–Cys256. The Charge relay system role is filled by Ser227. Asn277 and Asn303 each carry an N-linked (GlcNAc...) asparagine glycan. 4 cysteine pairs are disulfide-bonded: Cys300–Cys330, Cys358–Cys386, Cys432–Cys460, and Cys486–Cys507. 2 consecutive CUB domains span residues 300–423 and 432–545; these read CSSN…FHAV and CGGI…YYFS. 3 N-linked (GlcNAc...) asparagine glycosylation sites follow: Asn497, Asn513, and Asn549. The 236-residue stretch at 575–810 folds into the Peptidase S1 2 domain; sequence IVNGDIAIAG…YIDWIIATAN (236 aa). Cys602 and Cys618 form a disulfide bridge. Residues His617 and Asp665 each act as charge relay system in the active site. Disulfide bonds link Cys700–Cys766, Cys730–Cys745, and Cys756–Cys786. Asn748 is a glycosylation site (N-linked (GlcNAc...) asparagine). The Charge relay system role is filled by Ser760. N-linked (GlcNAc...) asparagine glycosylation is present at Asn810. Cystine bridges form between Cys830–Cys859, Cys889–Cys913, Cys956–Cys984, Cys1012–Cys1034, Cys1080–Cys1108, Cys1135–Cys1158, and Cys1221–Cys1246. CUB domains are found at residues 830–949, 956–1070, 1080–1197, and 1221–1341; these read CIQL…YRLE, CGQL…FVEL, CGGV…YTAV, and CQDS…YKLM. Asn968, Asn1027, Asn1087, and Asn1090 each carry an N-linked (GlcNAc...) asparagine glycan. N-linked (GlcNAc...) asparagine glycosylation is present at Asn1273. Residues 1314–1575 form the Peptidase S1 3 domain; sequence YNGGEISMLF…FLKWITKIIQ (262 aa). 2 cysteine pairs are disulfide-bonded: Cys1376–Cys1392 and Cys1493–Cys1507. Asn1511 carries N-linked (GlcNAc...) asparagine glycosylation.

It belongs to the peptidase S1 family. Expressed in the testis and ovary. Expressed in the gonads and gametes. Expressed in the follicle cells covering the vitelline coat of ovarian egg.

It is found in the secreted. Functionally, may be responsible for elevation of the vitelline coat at the late developmental stage of oogenesis and during fertilization in ovarian eggs. This Halocynthia roretzi (Sea squirt) protein is Ovochymase.